The primary structure comprises 284 residues: RNase adapter protein RapZ (284 aa).

8-15 (GRSGSGKS) serves as a coordination point for ATP. GTP is bound at residue 56-59 (DVRN). Positions 266–284 (RSRGKNVQSRHRTLEKRKT) are RNA-binding.

Belongs to the RapZ-like family. RapZ subfamily. As to quaternary structure, homotrimer.

Functionally, modulates the synthesis of GlmS, by affecting the processing and stability of the regulatory small RNA GlmZ. When glucosamine-6-phosphate (GlcN6P) concentrations are high in the cell, RapZ binds GlmZ and targets it to cleavage by RNase E. Consequently, GlmZ is inactivated and unable to activate GlmS synthesis. Under low GlcN6P concentrations, RapZ is sequestered and inactivated by an other regulatory small RNA, GlmY, preventing GlmZ degradation and leading to synthesis of GlmS. The chain is RNase adapter protein RapZ from Escherichia fergusonii (strain ATCC 35469 / DSM 13698 / CCUG 18766 / IAM 14443 / JCM 21226 / LMG 7866 / NBRC 102419 / NCTC 12128 / CDC 0568-73).